The chain runs to 686 residues: Heat shock 70 kDa protein 12B (686 aa).

The tract at residues 12 to 53 is disordered; that stretch reads LYIGSSPERSPVPSPPGSPRTQESCGIAPLTPSQSPKPEVRA. Residues Ser25 and Ser29 each carry the phosphoserine modification. Thr42 carries the phosphothreonine modification. Phosphoserine occurs at positions 44, 46, and 276.

Belongs to the heat shock protein 70 family. As to expression, highest expression in muscle and heart. Lower levels in liver and kidney.

The chain is Heat shock 70 kDa protein 12B (HSPA12B) from Homo sapiens (Human).